Here is a 464-residue protein sequence, read N- to C-terminus: MEYLPLFHNLRGSRVLVVGGGEIALRKSRLLADAGAQLRVVAPEIEAQLQELIVASGGESLLRGYVEADLDGCTLIIAATDDESLNAQVSADAHRRCVPVNVVDAPALCSVIFPAIVDRSPLVIAVSSGGDAPVLARLIRAKLETWIPSTYGQLAGLAARFRAQVKGLFPDVQQRRAFWEDVFQGPIADRQLAGQGAEAERLLQAKIAGKAPHAPGEVYLVGAGPGDPDLLTFRALRLMQQADVVLYDRLVAPAILELCRRDAERIYVGKRRADHAVPQEQINQQLVTLAQQGKRVVRLKGGDPFIFGRGGEEIEELAAHGIPFQVVPGITAASGCSAYAGIPLTHRDYAQSVRFVTGHLKDGTSNLPWSDLVAPAQTLVFYMGLVGLPTICEQLIKHGRGADTPAALVQQGTTSNQRVFTGTLGNLPALVAEHEVHAPTLVIVGEVVQLREKLAWFEGAQSEV.

The interval 1-203 (MEYLPLFHNL…GQGAEAERLL (203 aa)) is precorrin-2 dehydrogenase /sirohydrochlorin ferrochelatase. NAD(+) is bound by residues 22–23 (EI) and 43–44 (PE). Position 128 is a phosphoserine (Ser128). The tract at residues 216–464 (GEVYLVGAGP…AWFEGAQSEV (249 aa)) is uroporphyrinogen-III C-methyltransferase. Pro225 provides a ligand contact to S-adenosyl-L-methionine. Asp248 acts as the Proton acceptor in catalysis. The active-site Proton donor is the Lys270. S-adenosyl-L-methionine is bound by residues 301 to 303 (GGD), Ile306, 331 to 332 (TA), Met383, and Gly412.

In the N-terminal section; belongs to the precorrin-2 dehydrogenase / sirohydrochlorin ferrochelatase family. It in the C-terminal section; belongs to the precorrin methyltransferase family.

It catalyses the reaction uroporphyrinogen III + 2 S-adenosyl-L-methionine = precorrin-2 + 2 S-adenosyl-L-homocysteine + H(+). It carries out the reaction precorrin-2 + NAD(+) = sirohydrochlorin + NADH + 2 H(+). The enzyme catalyses siroheme + 2 H(+) = sirohydrochlorin + Fe(2+). It functions in the pathway cofactor biosynthesis; adenosylcobalamin biosynthesis; precorrin-2 from uroporphyrinogen III: step 1/1. Its pathway is cofactor biosynthesis; adenosylcobalamin biosynthesis; sirohydrochlorin from precorrin-2: step 1/1. It participates in porphyrin-containing compound metabolism; siroheme biosynthesis; precorrin-2 from uroporphyrinogen III: step 1/1. The protein operates within porphyrin-containing compound metabolism; siroheme biosynthesis; siroheme from sirohydrochlorin: step 1/1. It functions in the pathway porphyrin-containing compound metabolism; siroheme biosynthesis; sirohydrochlorin from precorrin-2: step 1/1. Multifunctional enzyme that catalyzes the SAM-dependent methylations of uroporphyrinogen III at position C-2 and C-7 to form precorrin-2 via precorrin-1. Then it catalyzes the NAD-dependent ring dehydrogenation of precorrin-2 to yield sirohydrochlorin. Finally, it catalyzes the ferrochelation of sirohydrochlorin to yield siroheme. The chain is Siroheme synthase from Pseudomonas fluorescens (strain ATCC BAA-477 / NRRL B-23932 / Pf-5).